The sequence spans 156 residues: 6,7-dimethyl-8-ribityllumazine synthase (156 aa).

5-amino-6-(D-ribitylamino)uracil is bound by residues phenylalanine 22, 57–59, and 81–83; these read AYE and TVI. Residue 86-87 participates in (2S)-2-hydroxy-3-oxobutyl phosphate binding; the sequence is GT. Histidine 89 functions as the Proton donor in the catalytic mechanism. Phenylalanine 114 provides a ligand contact to 5-amino-6-(D-ribitylamino)uracil. Arginine 128 lines the (2S)-2-hydroxy-3-oxobutyl phosphate pocket.

The protein belongs to the DMRL synthase family. Forms an icosahedral capsid composed of 60 subunits, arranged as a dodecamer of pentamers.

The catalysed reaction is (2S)-2-hydroxy-3-oxobutyl phosphate + 5-amino-6-(D-ribitylamino)uracil = 6,7-dimethyl-8-(1-D-ribityl)lumazine + phosphate + 2 H2O + H(+). It participates in cofactor biosynthesis; riboflavin biosynthesis; riboflavin from 2-hydroxy-3-oxobutyl phosphate and 5-amino-6-(D-ribitylamino)uracil: step 1/2. Functionally, catalyzes the formation of 6,7-dimethyl-8-ribityllumazine by condensation of 5-amino-6-(D-ribitylamino)uracil with 3,4-dihydroxy-2-butanone 4-phosphate. This is the penultimate step in the biosynthesis of riboflavin. This chain is 6,7-dimethyl-8-ribityllumazine synthase, found in Salmonella agona (strain SL483).